The following is a 1397-amino-acid chain: DNA-directed RNA polymerase subunit beta (1397 aa).

The protein belongs to the RNA polymerase beta chain family. In terms of assembly, the RNAP catalytic core consists of 2 alpha, 1 beta, 1 beta' and 1 omega subunit. When a sigma factor is associated with the core the holoenzyme is formed, which can initiate transcription.

It catalyses the reaction RNA(n) + a ribonucleoside 5'-triphosphate = RNA(n+1) + diphosphate. DNA-dependent RNA polymerase catalyzes the transcription of DNA into RNA using the four ribonucleoside triphosphates as substrates. The chain is DNA-directed RNA polymerase subunit beta from Rhodospirillum centenum (strain ATCC 51521 / SW).